The following is a 391-amino-acid chain: Phosphoglycerate kinase (391 aa).

Residues 21–23 (DLN), arginine 36, 59–62 (HLGR), arginine 114, and arginine 147 contribute to the substrate site. ATP is bound by residues lysine 198, glutamate 315, and 344–347 (GGDT).

The protein belongs to the phosphoglycerate kinase family. As to quaternary structure, monomer.

Its subcellular location is the cytoplasm. It carries out the reaction (2R)-3-phosphoglycerate + ATP = (2R)-3-phospho-glyceroyl phosphate + ADP. Its pathway is carbohydrate degradation; glycolysis; pyruvate from D-glyceraldehyde 3-phosphate: step 2/5. The protein is Phosphoglycerate kinase of Haemophilus ducreyi (strain 35000HP / ATCC 700724).